A 309-amino-acid polypeptide reads, in one-letter code: Probable manganese-dependent inorganic pyrophosphatase (309 aa).

6 residues coordinate Mn(2+): H9, D13, D15, D75, H97, and D149.

Belongs to the PPase class C family. Requires Mn(2+) as cofactor.

The protein resides in the cytoplasm. It catalyses the reaction diphosphate + H2O = 2 phosphate + H(+). The protein is Probable manganese-dependent inorganic pyrophosphatase of Bacillus velezensis (strain DSM 23117 / BGSC 10A6 / LMG 26770 / FZB42) (Bacillus amyloliquefaciens subsp. plantarum).